The primary structure comprises 872 residues: N-acetyltransferase eso1 (872 aa).

A polymerase type-Y region spans residues 1–591; that stretch reads MELGKSKFSW…KQVKPKTYGR (591 aa). The UmuC domain maps to 29-285; it reads VAHIDQDAFY…LKITDIRMLG (257 aa). Residues 533-567 form a UBZ3-type zinc finger; it reads SADETYTCEECEQKITLSERNEHEDYHIALSISRK. The Zn(2+) site is built by Cys540, Cys543, His555, and His559. Positions 569–602 are disordered; sequence RYNNLVPPSHDKPKQVKPKTYGRKTGSKHYAPLS. The segment covering 583–595 has biased composition (basic residues); the sequence is QVKPKTYGRKTGS. Positions 592–872 are acetyltransferase; that stretch reads KTGSKHYAPL…KSLRYAVYES (281 aa). The segment at 653–677 adopts a CCHH-type zinc-finger fold; the sequence is VTCSECSMEYNSTSEEDILLHSRFH.

It in the C-terminal section; belongs to the acetyltransferase family. ECO subfamily. The protein in the N-terminal section; belongs to the DNA polymerase type-Y family. As to quaternary structure, interacts with pds5.

Its subcellular location is the nucleus. Functionally, probable acetyltransferase required for the establishment of sister chromatid cohesion and couple the processes of cohesion and DNA replication to ensure that only sister chromatids become paired together. In contrast to the structural cohesins, the deposition and establishment factors are required only during S phase. The relevance of acetyltransferase function remains unclear. The polypeptide is N-acetyltransferase eso1 (eso1) (Schizosaccharomyces pombe (strain 972 / ATCC 24843) (Fission yeast)).